We begin with the raw amino-acid sequence, 158 residues long: NAD(P)H-quinone oxidoreductase subunit J, chloroplastic (158 aa).

Belongs to the complex I 30 kDa subunit family. In terms of assembly, NDH is composed of at least 16 different subunits, 5 of which are encoded in the nucleus.

The protein localises to the plastid. The protein resides in the chloroplast thylakoid membrane. It catalyses the reaction a plastoquinone + NADH + (n+1) H(+)(in) = a plastoquinol + NAD(+) + n H(+)(out). It carries out the reaction a plastoquinone + NADPH + (n+1) H(+)(in) = a plastoquinol + NADP(+) + n H(+)(out). NDH shuttles electrons from NAD(P)H:plastoquinone, via FMN and iron-sulfur (Fe-S) centers, to quinones in the photosynthetic chain and possibly in a chloroplast respiratory chain. The immediate electron acceptor for the enzyme in this species is believed to be plastoquinone. Couples the redox reaction to proton translocation, and thus conserves the redox energy in a proton gradient. The protein is NAD(P)H-quinone oxidoreductase subunit J, chloroplastic of Lupinus luteus (European yellow lupine).